A 163-amino-acid chain; its full sequence is Endoribonuclease YbeY (163 aa).

Residues histidine 129, histidine 133, and histidine 139 each coordinate Zn(2+).

It belongs to the endoribonuclease YbeY family. The cofactor is Zn(2+).

The protein resides in the cytoplasm. In terms of biological role, single strand-specific metallo-endoribonuclease involved in late-stage 70S ribosome quality control and in maturation of the 3' terminus of the 16S rRNA. The sequence is that of Endoribonuclease YbeY from Picosynechococcus sp. (strain ATCC 27264 / PCC 7002 / PR-6) (Agmenellum quadruplicatum).